A 404-amino-acid polypeptide reads, in one-letter code: Glycosylated lysosomal membrane protein B (404 aa).

Residues 1–24 form the signal peptide; sequence MSCTRGWRLILLGLLCVGLLGTRG. Topologically, residues 25–364 are lumenal; it reads QDESRKVSVQ…YGDPPRDSFS (340 aa). 15 N-linked (GlcNAc...) asparagine glycosylation sites follow: Asn-85, Asn-124, Asn-128, Asn-142, Asn-152, Asn-156, Asn-163, Asn-168, Asn-178, Asn-189, Asn-205, Asn-221, Asn-266, Asn-303, and Asn-330. The helical transmembrane segment at 365-385 threads the bilayer; the sequence is ILVICIMAVALGTPLLLLIIG. The Cytoplasmic portion of the chain corresponds to 386-404; it reads TVLVTAVRHKVYPNYQPIN. The short motif at 400–404 is the Lysosomal targeting motif element; that stretch reads YQPIN.

It belongs to the GLMP family. Interacts (via lumenal domain) with lysosomal protein MFSD1; the interaction starts while both proteins are still in the endoplasmic reticulum and is required for stabilization of MFSD1 in lysosomes but has no direct effect on its targeting to lysosomes or transporter activity.

It localises to the lysosome membrane. In terms of biological role, required to protect lysosomal transporter MFSD1 from lysosomal proteolysis and for MFSD1 lysosomal localization. In Xenopus laevis (African clawed frog), this protein is Glycosylated lysosomal membrane protein B (glmp-b).